Here is a 774-residue protein sequence, read N- to C-terminus: Transcription factor MBS1 (774 aa).

In terms of domain architecture, HTH APSES-type spans 37-143 (EITFYDSGVP…YVPTSVSPPP (107 aa)). Positions 68 to 89 (ATQILKVAGFDKPQRTRVLERE) form a DNA-binding region, H-T-H motif. Disordered regions lie at residues 135–180 (VPTS…SAAA) and 209–229 (RVSL…VASV). A compositionally biased stretch (basic and acidic residues) spans 155-165 (ARRDKEKETGR). Residues 166-176 (TKATPSRTGPT) show a composition bias toward polar residues. ANK repeat units lie at residues 348–377 (DGHT…SIFA) and 467–496 (EGET…NPKI). A disordered region spans residues 752-774 (EEENDNQVYNTSAGESGPSSWVQ). Polar residues predominate over residues 757–774 (NQVYNTSAGESGPSSWVQ).

It is found in the nucleus. Functionally, transcription factor that positively regulates ergosterol biosynthesis and thereby affects polyene and azole drug susceptibility. Plays a role in maintenance of membrane stability and osmotic stress response. Involved in genotoxic and oxidative stress responses. Also promotes production of melanin and capsule and thereby is required for full virulence. The sequence is that of Transcription factor MBS1 from Cryptococcus neoformans var. grubii serotype A (strain H99 / ATCC 208821 / CBS 10515 / FGSC 9487) (Filobasidiella neoformans var. grubii).